The chain runs to 976 residues: Dolichyl-phosphooligosaccharide-protein glycotransferase 1 (976 aa).

The Cytoplasmic segment spans residues 1 to 21 (MVKSKVKKVEKGKEGEEKRST). Residues 22 to 42 (YVLLKKVLIPILVFGFAIYAF) traverse the membrane as a helical segment. The Extracellular segment spans residues 43-112 (YLRHLTAGKY…KVVSLFGYNE (70 aa)). The DXD motif 1 motif lies at 55–57 (DPD). Asp57 is a binding site for Mn(2+). A helical membrane pass occupies residues 113–133 (LQAFLLWPPFVGFLGVIAVYL). The Cytoplasmic portion of the chain corresponds to 134–135 (LG). A helical membrane pass occupies residues 136 to 156 (RKVLNEWTGLWGAVVLTVSTA). Residues 157–165 (NFSRTFSGN) are Extracellular-facing. A helical transmembrane segment spans residues 166-186 (ARGDGPFMALFIFASVAMLYY). Arg167 and Asp169 together coordinate Mn(2+). Residues 167–169 (RGD) carry the DXD motif 2 motif. Topologically, residues 187 to 193 (LKESNKT) are cytoplasmic. Residues 194-214 (RKIIYGTLFVLLTVISLGAWN) form a helical membrane-spanning segment. Residue Gly215 is a topological domain, extracellular. A helical membrane pass occupies residues 216-236 (SPFGLMVLLGFASLQTIILFI). Residues 237 to 247 (FGKLEELKKFV) are Cytoplasmic-facing. Residues 248–268 (KEFYPAYLAILAFGYALTFPG) form a helical membrane-spanning segment. Ile269 is a topological domain (extracellular). The helical transmembrane segment at 270–290 (VKIGGFIRFAFEVFLGLIFLL) threads the bilayer. Residues 291–306 (VIMLYGGRYLNYSDKK) are Cytoplasmic-facing. Residues 307–327 (HRFLVVTIIVLLGFGGAYAYV) form a helical membrane-spanning segment. The Extracellular segment spans residues 328-360 (GPKLFRLMGGAYQSTQVYETVQELAKTTIGDVK). The short motif at 347–350 (TVQE) is the TIXE motif element. A helical membrane pass occupies residues 361-381 (AYYGVESGNGLIFFLSIPGLL). The Cytoplasmic portion of the chain corresponds to 382–396 (ILLTKYLYDLFKKAK). A helical transmembrane segment spans residues 397-417 (SDNETLFALVFYTMSLYLLYL). A topological domain (extracellular) is located at residue Ala418. A helical transmembrane segment spans residues 419–439 (VRFLFLASYAVALFFGIFIGF). Arg420 provides a ligand contact to a glycophospholipid. At 440–453 (SMDVIEKMKENIGI) the chain is on the cytoplasmic side. A helical membrane pass occupies residues 454–474 (KAALGIVLSLMILVIPFVHAP). Over 475 to 976 (VLARSARALK…SASAPHHSSE (502 aa)) the chain is Extracellular. Residues 513–515 (WWD) are interacts with target acceptor peptide in protein substrate. Residues 513–517 (WWDYG) carry the WWDYG motif motif. An a glycophospholipid-binding site is contributed by Tyr518. Positions 573 to 580 (DWAKFNAI) match the DK motif motif.

The protein belongs to the STT3 family. Requires Mn(2+) as cofactor. It depends on Mg(2+) as a cofactor.

The protein resides in the cell membrane. It carries out the reaction an archaeal dolichyl phosphooligosaccharide + [protein]-L-asparagine = an archaeal dolichyl phosphate + a glycoprotein with the oligosaccharide chain attached by N-beta-D-glycosyl linkage to a protein L-asparagine.. Its pathway is protein modification; protein glycosylation. Oligosaccharyl transferase (OST) that catalyzes the initial transfer of a defined glycan (ManNAcXyl(2)GlcAMan(2)GalNAc in Pyrococcus) from the lipid carrier dolichol-monophosphate to an asparagine residue within an Asn-X-Ser/Thr consensus motif in nascent polypeptide chains, the first step in protein N-glycosylation. The protein is Dolichyl-phosphooligosaccharide-protein glycotransferase 1 (aglB1) of Pyrococcus horikoshii (strain ATCC 700860 / DSM 12428 / JCM 9974 / NBRC 100139 / OT-3).